The chain runs to 217 residues: Thymidylate kinase (217 aa).

7–14 is an ATP binding site; that stretch reads GIDGAGKS.

It belongs to the thymidylate kinase family.

It catalyses the reaction dTMP + ATP = dTDP + ADP. In terms of biological role, phosphorylation of dTMP to form dTDP in both de novo and salvage pathways of dTTP synthesis. The sequence is that of Thymidylate kinase from Pelodictyon phaeoclathratiforme (strain DSM 5477 / BU-1).